The primary structure comprises 186 residues: Large ribosomal subunit protein uL5m (186 aa).

The protein belongs to the universal ribosomal protein uL5 family.

The protein localises to the mitochondrion. This Solanum tuberosum (Potato) protein is Large ribosomal subunit protein uL5m (RPL5).